We begin with the raw amino-acid sequence, 142 residues long: Large ribosomal subunit protein uL13 (142 aa).

It belongs to the universal ribosomal protein uL13 family. In terms of assembly, part of the 50S ribosomal subunit.

Its function is as follows. This protein is one of the early assembly proteins of the 50S ribosomal subunit, although it is not seen to bind rRNA by itself. It is important during the early stages of 50S assembly. The polypeptide is Large ribosomal subunit protein uL13 (Leptothrix cholodnii (strain ATCC 51168 / LMG 8142 / SP-6) (Leptothrix discophora (strain SP-6))).